The following is a 166-amino-acid chain: SsrA-binding protein (166 aa).

Residues 143-166 (HDKREDDKRKQANRDMKSALARYR) form a disordered region. Basic and acidic residues predominate over residues 144–159 (DKREDDKRKQANRDMK).

Belongs to the SmpB family.

The protein localises to the cytoplasm. Its function is as follows. Required for rescue of stalled ribosomes mediated by trans-translation. Binds to transfer-messenger RNA (tmRNA), required for stable association of tmRNA with ribosomes. tmRNA and SmpB together mimic tRNA shape, replacing the anticodon stem-loop with SmpB. tmRNA is encoded by the ssrA gene; the 2 termini fold to resemble tRNA(Ala) and it encodes a 'tag peptide', a short internal open reading frame. During trans-translation Ala-aminoacylated tmRNA acts like a tRNA, entering the A-site of stalled ribosomes, displacing the stalled mRNA. The ribosome then switches to translate the ORF on the tmRNA; the nascent peptide is terminated with the 'tag peptide' encoded by the tmRNA and targeted for degradation. The ribosome is freed to recommence translation, which seems to be the essential function of trans-translation. The sequence is that of SsrA-binding protein from Prochlorococcus marinus (strain MIT 9211).